Reading from the N-terminus, the 360-residue chain is Amine dehydrogenase (360 aa).

It belongs to the amine dehydrogenase family. Homodimer.

It carries out the reaction a secondary alkyl amine + NAD(+) + H2O = a ketone + NH4(+) + NADH + H(+). The catalysed reaction is a secondary alkyl amine + NADP(+) + H2O = a ketone + NH4(+) + NADPH + H(+). The enzyme catalyses serinol + NAD(+) + H2O = dihydroxyacetone + NH4(+) + NADH + H(+). It catalyses the reaction serinol + NADP(+) + H2O = dihydroxyacetone + NH4(+) + NADPH + H(+). It carries out the reaction 2-aminopropan-1-ol + NAD(+) + H2O = hydroxyacetone + NH4(+) + NADH + H(+). The catalysed reaction is (R)-1-phenylethylamine + NAD(+) + H2O = acetophenone + NH4(+) + NADH + H(+). The enzyme catalyses (S)-1-phenylethylamine + NAD(+) + H2O = acetophenone + NH4(+) + NADH + H(+). It catalyses the reaction (2S)-2-aminobutan-1-ol + NAD(+) + H2O = 1-hydroxy-2-butanone + NH4(+) + NADH + H(+). It carries out the reaction (2S)-2-amino-3-methylbutan-1-ol + NAD(+) + H2O = 1-hydroxy-3-methylbutan-2-one + NH4(+) + NADH + H(+). The catalysed reaction is 2-aminopentan-1-ol + NAD(+) + H2O = 1-hydroxypentan-2-one + NH4(+) + NADH + H(+). The enzyme catalyses (S)-leucinol + NAD(+) + H2O = 1-hydroxy-4-methylpentan-2-one + NH4(+) + NADH + H(+). It catalyses the reaction (S)-isoleucinol + NAD(+) + H2O = (3S)-1-hydroxy-3-methylpentan-2-one + NH4(+) + NADH + H(+). It carries out the reaction (S)-methioninol + NAD(+) + H2O = 1-hydroxy-4-(methythio)butan-2-one + NH4(+) + NADH + H(+). The catalysed reaction is 2-aminocyclohexanol + NAD(+) + H2O = 2-hydroxycyclohexan-1-one + NH4(+) + NADH + H(+). The enzyme catalyses L-alanine + NAD(+) + H2O = pyruvate + NH4(+) + NADH + H(+). It catalyses the reaction D-alanine + NAD(+) + H2O = pyruvate + NH4(+) + NADH + H(+). It carries out the reaction L-aspartate + NAD(+) + H2O = oxaloacetate + NH4(+) + NADH + H(+). The catalysed reaction is D-aspartate + NAD(+) + H2O = oxaloacetate + NH4(+) + NADH + H(+). The enzyme catalyses L-glutamate + NAD(+) + H2O = 2-oxoglutarate + NH4(+) + NADH + H(+). It catalyses the reaction D-glutamate + NAD(+) + H2O = 2-oxoglutarate + NH4(+) + NADH + H(+). It carries out the reaction L-serine + NAD(+) + H2O = 3-hydroxypyruvate + NH4(+) + NADH + H(+). The catalysed reaction is D-serine + NAD(+) + H2O = 3-hydroxypyruvate + NH4(+) + NADH + H(+). The enzyme catalyses methylamine + NAD(+) + H2O = formaldehyde + NH4(+) + NADH + H(+). It catalyses the reaction ethylamine + NAD(+) + H2O = acetaldehyde + NH4(+) + NADH + H(+). It carries out the reaction propylamine + NAD(+) + H2O = propanal + NH4(+) + NADH + H(+). The catalysed reaction is butylamine + NAD(+) + H2O = butanal + NH4(+) + NADH + H(+). The enzyme catalyses hexylamine + NAD(+) + H2O = hexanal + NH4(+) + NADH + H(+). It catalyses the reaction octylamine + NAD(+) + H2O = octanal + NH4(+) + NADH + H(+). It carries out the reaction (R)-sec-butylamine + NAD(+) + H2O = butan-2-one + NH4(+) + NADH + H(+). The catalysed reaction is (S)-sec-butylamine + NAD(+) + H2O = butan-2-one + NH4(+) + NADH + H(+). The enzyme catalyses 2-aminopentane + NAD(+) + H2O = pentan-2-one + NH4(+) + NADH + H(+). It catalyses the reaction 3-aminopentane + NAD(+) + H2O = pentan-3-one + NH4(+) + NADH + H(+). It carries out the reaction (2R)-heptan-2-amine + NAD(+) + H2O = heptan-2-one + NH4(+) + NADH + H(+). The catalysed reaction is (2S)-heptan-2-amine + NAD(+) + H2O = heptan-2-one + NH4(+) + NADH + H(+). The enzyme catalyses benzylamine + NAD(+) + H2O = benzaldehyde + NH4(+) + NADH + H(+). It catalyses the reaction 3-aminobutan-2-ol + NAD(+) + H2O = acetoin + NH4(+) + NADH + H(+). It carries out the reaction 3-aminobutan-1-ol + NAD(+) + H2O = 4-hydroxybutan-2-one + NH4(+) + NADH + H(+). The catalysed reaction is 5-hydroxypentan-2-amine + NAD(+) + H2O = 5-hydroxypentan-2-one + NH4(+) + NADH + H(+). The enzyme catalyses 4-hydroxyhexan-3-amine + NAD(+) + H2O = 4-hydroxyhexan-3-one + NH4(+) + NADH + H(+). It catalyses the reaction 5-hydroxyoctan-4-amine + NAD(+) + H2O = 5-hydroxyoctan-4-one + NH4(+) + NADH + H(+). It carries out the reaction 2-hydroxy-1-phenylethan-1-amine + NAD(+) + H2O = 2-hydroxyacetophenone + NH4(+) + NADH + H(+). The catalysed reaction is hexan-2-amine + NAD(+) + H2O = hexan-2-one + NH4(+) + NADH + H(+). The enzyme catalyses 4-phenylbutan-2-amine + NAD(+) + H2O = 4-phenylbutan-2-one + NH4(+) + NADH + H(+). In terms of biological role, catalyzes the reversible oxidative deaminations of a broad range of amines, amino alcohols and amino acids. Catalyzes the reversible dehydrogenation of serinol in the presence of NAD(+) to give dihydroxyacetone, ammonium ion and NADH, while NADP(+) shows a slight activity. Is also able to produce 2-amino-1-propanol and aspartate by the reductive amination of the corresponding keto alcohol (hydroxyacetone) and keto acid (oxaloacetate) in the presence of ammonium ions and NADH, and that of acetophenone from phenylethylamine by the oxidative deamination in the presence of NAD(+). The protein is Amine dehydrogenase of Streptomyces virginiae (Streptomyces cinnamonensis).